A 991-amino-acid chain; its full sequence is MSSNTVAQFATELKMPANVLLEQLRSAGVDLNSVDDAVTDSDKAKLLDSLRRAHGATEGKKITLTRRQTSEIRQADATGRSRTIQVEVRKKRVFVKRDPSEIALEQARADAAASDAAPAEPAPAAAEPSASAPVTAPVNAPAADAPQAPATAAPDTAAPAAETPSQPPAVEPQPAPVAQAEPEPQPEPVAKPAEAPAEPAAPAAVEAHAEREAEQAPPEPAVQAEIETAPAPAAESAQAARPEPVTPKAEPAPAASKPARAEGRRGAPVPVAAPAVDSAGREEARRAAEAEAAALREMLNRPRKVLRAPEPEAGALSGTLHKPAGKAAAPGAKKDAKPGAGGSKKTIKTAEVASTWSDDASRKKPADTKSAAPSRDGWRAGGKGGKGGRNSRNQQAERRHEPAPQEFIAREVHVPETISVADLAHKMSVKAAEVIKQLMKLGQMVTINQVLDQETAMIVVEELGHVAIAAKLDDPEAFLDETPVASEAEALPRAPVVTVMGHVDHGKTSLLDYIRRAKVASGEAGGITQHIGAYHVETARGVVTFLDTPGHEAFTAMRARGAKATDIVILVVAADDGVMPQTREAIHHAKAGGVPLVVAVNKIDKPEANPERVKQELVAEEVVPEEYGGDVPFVPVSAKTGAGIDDLLENVLLQAEILELTAPVEAPAKGLVIEARLDKGRGPVATILVQSGTLKRGDVVLAGASFGRVRAMVDENGKQIQEAGPSIPVEIQGLTEVPAAGDELIALADERKAREIALFRQGKFRDVKLARQQAAKLESMFDNLGEGTQTLPLIVKTDVQGSQEALVASLTKLSTDEVRVQVVHAAVGGISESDINLAIASNAVVIGFNVRAEQSAKKLAESNGIDVRYYNIIYDAVDEVKAAMSGMLAPEKKEEVIGLVEVREVYSISRIGNVAGCMVLDGLVRRDSQIRLLRNNVVHWTGHLDSLRRFKDDVKEVKSGFDCGLTLRGSNDIQVGDQLEVFEIKEIARTL.

2 disordered regions span residues 58–82 (EGKK…GRSR) and 106–405 (QARA…PAPQ). Low complexity predominate over residues 106–164 (QARADAAASDAAPAEPAPAAAEPSASAPVTAPVNAPAADAPQAPATAAPDTAAPAAETP). Residues 165–175 (SQPPAVEPQPA) show a composition bias toward pro residues. 3 stretches are compositionally biased toward low complexity: residues 190–206 (AKPA…AAVE), 221–258 (AVQA…ASKP), and 267–276 (APVPVAAPAV). Basic and acidic residues predominate over residues 279–289 (AGREEARRAAE). Residues 379-388 (RAGGKGGKGG) are compositionally biased toward gly residues. Residues 395–405 (QAERRHEPAPQ) are compositionally biased toward basic and acidic residues. One can recognise a tr-type G domain in the interval 492–659 (PRAPVVTVMG…NVLLQAEILE (168 aa)). A G1 region spans residues 501-508 (GHVDHGKT). 501-508 (GHVDHGKT) is a GTP binding site. Positions 526–530 (GITQH) are G2. The interval 547–550 (DTPG) is G3. GTP contacts are provided by residues 547 to 551 (DTPGH) and 601 to 604 (NKID). A G4 region spans residues 601–604 (NKID). Residues 637-639 (SAK) form a G5 region.

Belongs to the TRAFAC class translation factor GTPase superfamily. Classic translation factor GTPase family. IF-2 subfamily.

The protein localises to the cytoplasm. Its function is as follows. One of the essential components for the initiation of protein synthesis. Protects formylmethionyl-tRNA from spontaneous hydrolysis and promotes its binding to the 30S ribosomal subunits. Also involved in the hydrolysis of GTP during the formation of the 70S ribosomal complex. The chain is Translation initiation factor IF-2 from Bordetella petrii (strain ATCC BAA-461 / DSM 12804 / CCUG 43448).